A 446-amino-acid polypeptide reads, in one-letter code: Exodeoxyribonuclease 7 large subunit (446 aa).

It belongs to the XseA family. In terms of assembly, heterooligomer composed of large and small subunits.

It localises to the cytoplasm. It catalyses the reaction Exonucleolytic cleavage in either 5'- to 3'- or 3'- to 5'-direction to yield nucleoside 5'-phosphates.. Its function is as follows. Bidirectionally degrades single-stranded DNA into large acid-insoluble oligonucleotides, which are then degraded further into small acid-soluble oligonucleotides. This chain is Exodeoxyribonuclease 7 large subunit, found in Streptococcus equi subsp. zooepidemicus (strain MGCS10565).